The chain runs to 60 residues: UPF0181 protein ESA_01442 (60 aa).

The protein belongs to the UPF0181 family.

The chain is UPF0181 protein ESA_01442 from Cronobacter sakazakii (strain ATCC BAA-894) (Enterobacter sakazakii).